The primary structure comprises 363 residues: MRVSDFNFDLPDELIARYPKTDRVSCRLLQLNGENGEIFHRTFSDVLDLIDEGDLLIFNNTRVIPARMFGRKASGGKIEVLVERMLDEHRFLAHIRSSKSPKEGAELFLGEDKLGENNGIKAVMKARHGALFEVELSDKSTALLDVLQTIGHMPLPPYIDRPDEEADQECYQTVYSKVPGAVAAPTAGLHFDENLLEKLKAKGVNFEFVTLHVGAGTFQPVRVENIEDHVMHAEYVEVSQEVCNAIIATKKAGKRVIAVGTTSVRSIESAALSAEEFGNPDLIEPYFSDTSIFIYPGKKFRVVDCLITNFHLPESTLIMLVSAFAGYKNTMNAYKHAVKEKYRFFSYGDAMFINKNSNVRGLE.

This sequence belongs to the QueA family. Monomer.

It localises to the cytoplasm. The enzyme catalyses 7-aminomethyl-7-carbaguanosine(34) in tRNA + S-adenosyl-L-methionine = epoxyqueuosine(34) in tRNA + adenine + L-methionine + 2 H(+). It participates in tRNA modification; tRNA-queuosine biosynthesis. Functionally, transfers and isomerizes the ribose moiety from AdoMet to the 7-aminomethyl group of 7-deazaguanine (preQ1-tRNA) to give epoxyqueuosine (oQ-tRNA). This Haemophilus influenzae (strain ATCC 51907 / DSM 11121 / KW20 / Rd) protein is S-adenosylmethionine:tRNA ribosyltransferase-isomerase.